Here is a 346-residue protein sequence, read N- to C-terminus: Tetraacyldisaccharide 4'-kinase (346 aa).

54-61 (TVGGAGKT) is an ATP binding site.

This sequence belongs to the LpxK family.

It catalyses the reaction a lipid A disaccharide + ATP = a lipid IVA + ADP + H(+). It functions in the pathway glycolipid biosynthesis; lipid IV(A) biosynthesis; lipid IV(A) from (3R)-3-hydroxytetradecanoyl-[acyl-carrier-protein] and UDP-N-acetyl-alpha-D-glucosamine: step 6/6. Transfers the gamma-phosphate of ATP to the 4'-position of a tetraacyldisaccharide 1-phosphate intermediate (termed DS-1-P) to form tetraacyldisaccharide 1,4'-bis-phosphate (lipid IVA). The sequence is that of Tetraacyldisaccharide 4'-kinase from Sinorhizobium medicae (strain WSM419) (Ensifer medicae).